A 168-amino-acid polypeptide reads, in one-letter code: MQRKFLRKKALSLRSRALCPQEIKKQYPYILLFHCSGLTSRQWRQIKNILCTIKGKTLFKPKEKKQNILPNNQGDWIAQLASSAGPTCILYLAKEAPNNTWSQLLPSASYSQNLVLLYGQDRSTVFNHMDIKKATTLETTSVFQQLFGFMFLPGACFLFLVEQANGRK.

The protein resides in the mitochondrion. This is an uncharacterized protein from Marchantia polymorpha (Common liverwort).